The chain runs to 132 residues: Small ribosomal subunit protein uS8 (132 aa).

Belongs to the universal ribosomal protein uS8 family. As to quaternary structure, part of the 30S ribosomal subunit. Contacts proteins S5 and S12.

In terms of biological role, one of the primary rRNA binding proteins, it binds directly to 16S rRNA central domain where it helps coordinate assembly of the platform of the 30S subunit. This chain is Small ribosomal subunit protein uS8, found in Clavibacter michiganensis subsp. michiganensis (strain NCPPB 382).